Reading from the N-terminus, the 569-residue chain is Intraflagellar transport protein 74/72 (569 aa).

3 coiled-coil regions span residues 75 to 156 (ITAT…TRNE), 201 to 231 (YRSLNDENITLKQKESELRKELQEAAAVAAN), and 271 to 298 (AITLHRQIRAAKRELDAYKAKIKAAESH).

It belongs to the IFT74 family.

It is found in the cell projection. The protein resides in the cilium. It localises to the flagellum. Its subcellular location is the cytoplasm. The protein localises to the cytoskeleton. It is found in the flagellum axoneme. The protein resides in the flagellum basal body. Its function is as follows. Component of the intraflagellar transport complex B (IFT-B) involved in flagellar assembly. The protein is Intraflagellar transport protein 74/72 of Giardia intestinalis (strain ATCC 50803 / WB clone C6) (Giardia lamblia).